The chain runs to 98 residues: NADH-ubiquinone oxidoreductase chain 4L (98 aa).

3 helical membrane passes run 2 to 22, 29 to 49, and 61 to 81; these read PSIS…MLMF, SLLC…LIIL, and ILLL…LVMV.

Belongs to the complex I subunit 4L family. Core subunit of respiratory chain NADH dehydrogenase (Complex I) which is composed of 45 different subunits.

It is found in the mitochondrion inner membrane. It catalyses the reaction a ubiquinone + NADH + 5 H(+)(in) = a ubiquinol + NAD(+) + 4 H(+)(out). Core subunit of the mitochondrial membrane respiratory chain NADH dehydrogenase (Complex I) which catalyzes electron transfer from NADH through the respiratory chain, using ubiquinone as an electron acceptor. Part of the enzyme membrane arm which is embedded in the lipid bilayer and involved in proton translocation. This chain is NADH-ubiquinone oxidoreductase chain 4L (MT-ND4L), found in Microcebus griseorufus (Gray-brown mouse lemur).